Here is a 430-residue protein sequence, read N- to C-terminus: Serine--tRNA ligase (430 aa).

236 to 238 is an L-serine binding site; it reads TAE. 267–269 is an ATP binding site; that stretch reads RSE. Glutamate 290 contacts L-serine. Residue 354–357 coordinates ATP; sequence EISS. Serine 390 lines the L-serine pocket.

This sequence belongs to the class-II aminoacyl-tRNA synthetase family. Type-1 seryl-tRNA synthetase subfamily. Homodimer. The tRNA molecule binds across the dimer.

It is found in the cytoplasm. It carries out the reaction tRNA(Ser) + L-serine + ATP = L-seryl-tRNA(Ser) + AMP + diphosphate + H(+). The catalysed reaction is tRNA(Sec) + L-serine + ATP = L-seryl-tRNA(Sec) + AMP + diphosphate + H(+). It participates in aminoacyl-tRNA biosynthesis; selenocysteinyl-tRNA(Sec) biosynthesis; L-seryl-tRNA(Sec) from L-serine and tRNA(Sec): step 1/1. Functionally, catalyzes the attachment of serine to tRNA(Ser). Is also able to aminoacylate tRNA(Sec) with serine, to form the misacylated tRNA L-seryl-tRNA(Sec), which will be further converted into selenocysteinyl-tRNA(Sec). The protein is Serine--tRNA ligase of Idiomarina loihiensis (strain ATCC BAA-735 / DSM 15497 / L2-TR).